We begin with the raw amino-acid sequence, 730 residues long: MLYKYLFIYIVTKISLSSSLYHNFCTINNTNGSNFNVFDTNNGRFLNKNNRIRNILNKNINKKSSFSFINGNSLKNFKNDHKYHDFTKFTKIPEFLEEDNEPIVSELIRNFCIIAHVDHGKSTLADRFLEFTKSVPPERLKEQYLDNMELERERGITIKLQSARIKYNSILDGKTYTLNLIDTPGHIDFNHEARRSISACEGAILVVDGTKGIEAQTVTTANIAIEKGLKIIPVVNKIDLEHCDFKSTAESLKKFFGFKESDILKASAKKGIGIEDILEAVVVSIPPPKVDLEKPFRALVFDSFYDPYRGAICYIRVCCVFRLYFQVFEGSTKIGDEITLMNADITSKVTGLGIMLPEMKQTHSLQLVNSSGQVGWITAGIKKTNEIHVGDTISLKSYVKKNLVEPINKFENSKPTVFAGIYPCIGGDFDKLQTALEKLKLNDHSFQFERSDSSMVGMGFKCGFNGLLHLDITVERLEREFDTQVIVTSPSVPYRCTLRDKSVVTVDDASKWPDESQIKSSEEPWTDVTLRVPEEYFLSFINIILSSVGSVMSMLSKMRGRFKEKNKVKDTNMVVMNYDLPLSEILSDFFNKLKSVTNGYGSYDYEGTFYEPIELCKLKILLNGTEAKGLAVVTPRNRAYDRGKLIVETLVNLIPSRQFKVPVQAVIGKRVISSSNIPAVKKNVIEKCSGGDPSRKKKLLENQARVLLVLINDVIGKETNGSGRMCNNPF.

The tr-type G domain maps to 106-289 (ELIRNFCIIA…AVVVSIPPPK (184 aa)). GTP is bound by residues 115–122 (AHVDHGKS), 182–186 (DTPGH), and 236–239 (NKID).

The protein belongs to the TRAFAC class translation factor GTPase superfamily. Classic translation factor GTPase family. LepA subfamily.

The protein resides in the mitochondrion inner membrane. It carries out the reaction GTP + H2O = GDP + phosphate + H(+). In terms of biological role, promotes mitochondrial protein synthesis. May act as a fidelity factor of the translation reaction, by catalyzing a one-codon backward translocation of tRNAs on improperly translocated ribosomes. Binds to mitochondrial ribosomes in a GTP-dependent manner. This Theileria annulata protein is Translation factor GUF1 homolog, mitochondrial.